Reading from the N-terminus, the 184-residue chain is Probable chemoreceptor glutamine deamidase CheD (184 aa).

This sequence belongs to the CheD family.

The catalysed reaction is L-glutaminyl-[protein] + H2O = L-glutamyl-[protein] + NH4(+). Its function is as follows. Probably deamidates glutamine residues to glutamate on methyl-accepting chemotaxis receptors (MCPs), playing an important role in chemotaxis. The protein is Probable chemoreceptor glutamine deamidase CheD of Rhizobium leguminosarum bv. trifolii (strain WSM2304).